We begin with the raw amino-acid sequence, 316 residues long: Zinc finger protein 330 (316 aa).

Positions 1–24 are disordered; that stretch reads MPKKKTGARKKAENRREREKQLRA. Residues 3 to 11 carry the Nuclear localization signal motif; sequence KKKTGARKK. The segment covering 10-22 has biased composition (basic and acidic residues); that stretch reads KKAENRREREKQL. C4-type zinc fingers lie at residues 42–58, 67–104, 129–149, and 175–189; these read CDKC…CYFC, CAQC…CDFC, CVEC…CSFC, and CVSC…CLRC. A disordered region spans residues 227–299; sequence SMSTRSLKFG…ESSDLFNNLN (73 aa). Residues 268 to 291 are compositionally biased toward acidic residues; sequence DDDEEEDEAEDEEEEDGKDSDAES. Ser287 bears the Phosphoserine mark.

This sequence belongs to the NOA36 family.

The protein resides in the nucleus. It localises to the nucleolus. It is found in the chromosome. The protein localises to the centromere. In Mus musculus (Mouse), this protein is Zinc finger protein 330 (Znf330).